A 449-amino-acid polypeptide reads, in one-letter code: Asparagine--tRNA ligase (449 aa).

This sequence belongs to the class-II aminoacyl-tRNA synthetase family. As to quaternary structure, homodimer.

Its subcellular location is the cytoplasm. The enzyme catalyses tRNA(Asn) + L-asparagine + ATP = L-asparaginyl-tRNA(Asn) + AMP + diphosphate + H(+). The polypeptide is Asparagine--tRNA ligase (Desulfotalea psychrophila (strain LSv54 / DSM 12343)).